Reading from the N-terminus, the 325-residue chain is Holliday junction branch migration complex subunit RuvB (325 aa).

Positions 1 to 180 are large ATPase domain (RuvB-L); the sequence is MKNQLLDAKV…FGIHLKLNFY (180 aa). ATP contacts are provided by residues Leu19, Arg20, Gly61, Lys64, Thr65, Ser66, 127-129, Arg170, Tyr180, and Arg217; that span reads EDF. Thr65 contributes to the Mg(2+) binding site. Positions 181–251 are small ATPAse domain (RuvB-S); sequence SCEELTQIVE…ITDYALNQLG (71 aa). The head domain (RuvB-H) stretch occupies residues 254-325; it reads KLGLDSSDHK…ITANALKHLH (72 aa). DNA-binding residues include Arg290, Arg309, and Arg314.

It belongs to the RuvB family. In terms of assembly, homohexamer. Forms an RuvA(8)-RuvB(12)-Holliday junction (HJ) complex. HJ DNA is sandwiched between 2 RuvA tetramers; dsDNA enters through RuvA and exits via RuvB. An RuvB hexamer assembles on each DNA strand where it exits the tetramer. Each RuvB hexamer is contacted by two RuvA subunits (via domain III) on 2 adjacent RuvB subunits; this complex drives branch migration. In the full resolvosome a probable DNA-RuvA(4)-RuvB(12)-RuvC(2) complex forms which resolves the HJ.

Its subcellular location is the cytoplasm. It carries out the reaction ATP + H2O = ADP + phosphate + H(+). In terms of biological role, the RuvA-RuvB-RuvC complex processes Holliday junction (HJ) DNA during genetic recombination and DNA repair, while the RuvA-RuvB complex plays an important role in the rescue of blocked DNA replication forks via replication fork reversal (RFR). RuvA specifically binds to HJ cruciform DNA, conferring on it an open structure. The RuvB hexamer acts as an ATP-dependent pump, pulling dsDNA into and through the RuvAB complex. RuvB forms 2 homohexamers on either side of HJ DNA bound by 1 or 2 RuvA tetramers; 4 subunits per hexamer contact DNA at a time. Coordinated motions by a converter formed by DNA-disengaged RuvB subunits stimulates ATP hydrolysis and nucleotide exchange. Immobilization of the converter enables RuvB to convert the ATP-contained energy into a lever motion, pulling 2 nucleotides of DNA out of the RuvA tetramer per ATP hydrolyzed, thus driving DNA branch migration. The RuvB motors rotate together with the DNA substrate, which together with the progressing nucleotide cycle form the mechanistic basis for DNA recombination by continuous HJ branch migration. Branch migration allows RuvC to scan DNA until it finds its consensus sequence, where it cleaves and resolves cruciform DNA. In Orientia tsutsugamushi (strain Boryong) (Rickettsia tsutsugamushi), this protein is Holliday junction branch migration complex subunit RuvB.